We begin with the raw amino-acid sequence, 261 residues long: MAAISTCQTVIPLPIPVFFNQQFPTLVDICARWQLVFDADAPFELRFESDTLTLHKRDEPKLDGIIVDFVTGAVAHRRKFGGGRGQSIAKAVGLKQGVTPKVVDGTAGLGRDAFVLASLGCTVTMVERHPVVAALLEDGLRRAYQDAEIGDWMRERMQLFHGSSLEALAKLEQEVDVVYLDPMYPHRDKSALVKKEMRVFQTLVGADLDADGLLAPAMALASKRVVVKRPDYAEDLAGVKPSMVIETKKNRFDVYVKSAMK.

Residues 111-112 (RD), 127-128 (ER), 163-164 (SS), and Asp181 contribute to the S-adenosyl-L-methionine site.

Belongs to the methyltransferase superfamily. RsmJ family.

Its subcellular location is the cytoplasm. The enzyme catalyses guanosine(1516) in 16S rRNA + S-adenosyl-L-methionine = N(2)-methylguanosine(1516) in 16S rRNA + S-adenosyl-L-homocysteine + H(+). Functionally, specifically methylates the guanosine in position 1516 of 16S rRNA. The protein is Ribosomal RNA small subunit methyltransferase J of Shewanella sp. (strain MR-7).